The sequence spans 506 residues: uncharacterized protein (506 aa).

This sequence to group II intron maturases.

The protein localises to the plastid. It localises to the chloroplast. This is an uncharacterized protein from Euglena gracilis.